The primary structure comprises 263 residues: Eukaryotic translation initiation factor 3 subunit J-B (263 aa).

The segment covering 1–13 has biased composition (low complexity); that stretch reads MAAAAAAAAAAAA. Positions 1-115 are disordered; the sequence is MAAAAAAAAA…EPEESKVLTP (115 aa). Ala-2 carries the post-translational modification N-acetylalanine. Positions 6 to 74 are sufficient for interaction with EIF3B; the sequence is AAAAAAAAGD…KEEAEVKPEV (69 aa). A phosphoserine mark is found at Ser-16, Ser-18, and Ser-25. Positions 45 to 66 are enriched in acidic residues; it reads EGEDEDEDVKDNWDDDDDENKE. Residues 67-111 are compositionally biased toward basic and acidic residues; sequence EAEVKPEVKISEKKKIAEKIKEKERQQKKRQEEIKKRLEEPEESK. Positions 75-140 form a coiled coil; that stretch reads KISEKKKIAE…ESDLELAKET (66 aa). Residue Lys-111 forms a Glycyl lysine isopeptide (Lys-Gly) (interchain with G-Cter in SUMO2) linkage. Thr-114 carries the phosphothreonine modification. At Ser-132 the chain carries Phosphoserine. Residues 248–263 form a promotes stable association with the 40S ribosome region; it reads YGGYEGGYVQDYEDFM. Tyr-259 carries the phosphotyrosine modification.

Belongs to the eIF-3 subunit J family. In terms of assembly, component of the eukaryotic translation initiation factor 3 (eIF-3) complex, which is composed of 13 subunits: EIF3A, EIF3B, EIF3C, EIF3D, EIF3E, EIF3F, EIF3G, EIF3H, EIF3I, EIF3J, EIF3K, EIF3L and EIF3M. The eIF-3 complex appears to include 3 stable modules: module A is composed of EIF3A, EIF3B, EIF3G and EIF3I; module B is composed of EIF3F, EIF3H, and EIF3M; and module C is composed of EIF3C, EIF3D, EIF3E, EIF3K and EIF3L. EIF3C of module C binds EIF3B of module A and EIF3H of module B, thereby linking the three modules. EIF3J is a labile subunit that binds to the eIF-3 complex via EIF3B. The eIF-3 complex interacts with RPS6KB1 under conditions of nutrient depletion. Mitogenic stimulation leads to binding and activation of a complex composed of MTOR and RPTOR, leading to phosphorylation and release of RPS6KB1 and binding of EIF4B to eIF-3. Post-translationally, phosphorylated. Phosphorylation is enhanced upon serum stimulation.

The protein localises to the cytoplasm. In terms of biological role, component of the eukaryotic translation initiation factor 3 (eIF-3) complex, which is required for several steps in the initiation of protein synthesis. The eIF-3 complex associates with the 40S ribosome and facilitates the recruitment of eIF-1, eIF-1A, eIF-2:GTP:methionyl-tRNAi and eIF-5 to form the 43S pre-initiation complex (43S PIC). The eIF-3 complex stimulates mRNA recruitment to the 43S PIC and scanning of the mRNA for AUG recognition. The eIF-3 complex is also required for disassembly and recycling of post-termination ribosomal complexes and subsequently prevents premature joining of the 40S and 60S ribosomal subunits prior to initiation. The eIF-3 complex specifically targets and initiates translation of a subset of mRNAs involved in cell proliferation, including cell cycling, differentiation and apoptosis, and uses different modes of RNA stem-loop binding to exert either translational activation or repression. This subunit binds directly within the mRNA entry channel of the 40S ribosome to the aminoacyl (A) site. It may regulate the interaction between the 43S PIC and mRNA. The sequence is that of Eukaryotic translation initiation factor 3 subunit J-B (Eif3j2) from Mus musculus (Mouse).